The sequence spans 480 residues: Protein disulfide-isomerase 5-4 (480 aa).

N74 and N99 each carry an N-linked (GlcNAc...) asparagine glycan. A Thioredoxin domain is found at 120–263 (FHAGEVLSLI…LVKMVVSLVE (144 aa)). Active-site nucleophile residues include C170 and C173. A disulfide bond links C170 and C173. Residues N280, N326, and N376 are each glycosylated (N-linked (GlcNAc...) asparagine). A helical membrane pass occupies residues 439 to 459 (FSHFITNVCAIIGGVFTVAGI).

It belongs to the protein disulfide isomerase family. Widely expressed.

It localises to the membrane. Functionally, acts as a protein-folding catalyst that interacts with nascent polypeptides to catalyze the formation, isomerization, and reduction or oxidation of disulfide bonds. This is Protein disulfide-isomerase 5-4 (PDIL5-4) from Arabidopsis thaliana (Mouse-ear cress).